Consider the following 160-residue polypeptide: Protein cornichon homolog 2 (160 aa).

The Cytoplasmic portion of the chain corresponds to 1 to 10 (MAFTFAAFCY). The chain crosses the membrane as a helical span at residues 11 to 31 (MLTLVLCAALIFFVIWQIIAF). Residues 32-72 (DELRTDFKNPIDQSNPTRARERILNIERICNLLRRLVVPEY) lie on the Lumenal side of the membrane. Residues 73-93 (SIHGLFCLMFMCAGEWVTLGL) form a helical membrane-spanning segment. The Cytoplasmic segment spans residues 94–138 (NIPLLLYHLWRFFHRPADGSEVMYDPVSVMNADILNYCQKESWCK). A helical transmembrane segment spans residues 139–159 (LGFYLLSFFYYLYSMVYALVS). A topological domain (lumenal) is located at residue phenylalanine 160.

The protein belongs to the cornichon family.

The protein resides in the membrane. In terms of biological role, regulates the trafficking and gating properties of AMPA-selective glutamate receptors (AMPARs). In Danio rerio (Zebrafish), this protein is Protein cornichon homolog 2 (cnih2).